We begin with the raw amino-acid sequence, 348 residues long: Phosphoribosylformylglycinamidine cyclo-ligase (348 aa).

Belongs to the AIR synthase family.

Its subcellular location is the cytoplasm. The enzyme catalyses 2-formamido-N(1)-(5-O-phospho-beta-D-ribosyl)acetamidine + ATP = 5-amino-1-(5-phospho-beta-D-ribosyl)imidazole + ADP + phosphate + H(+). Its pathway is purine metabolism; IMP biosynthesis via de novo pathway; 5-amino-1-(5-phospho-D-ribosyl)imidazole from N(2)-formyl-N(1)-(5-phospho-D-ribosyl)glycinamide: step 2/2. The sequence is that of Phosphoribosylformylglycinamidine cyclo-ligase from Geobacter sulfurreducens (strain ATCC 51573 / DSM 12127 / PCA).